The sequence spans 76 residues: Frizzled-3 (76 aa).

Residues 1–5 are Cytoplasmic-facing; it reads YPERP. The helical transmembrane segment at 6 to 26 threads the bilayer; it reads IIFYAVCYMMVSLIFFIGFLL. The Extracellular portion of the chain corresponds to 27 to 54; it reads EDRVACNASSPAQYKASTVTQGSHNKAC. N-linked (GlcNAc...) asparagine glycosylation occurs at Asn-33. A helical membrane pass occupies residues 55–75; the sequence is TMLFMVLYFFTMAGSVWWVIL. A topological domain (cytoplasmic) is located at residue Arg-76.

Belongs to the G-protein coupled receptor Fz/Smo family.

Its subcellular location is the membrane. The protein resides in the cell membrane. It localises to the cell surface. It is found in the apical cell membrane. In terms of biological role, receptor for Wnt proteins. Most of frizzled receptors are coupled to the beta-catenin canonical signaling pathway, which leads to the activation of disheveled proteins, inhibition of GSK-3 kinase, nuclear accumulation of beta-catenin and activation of Wnt target genes. A second signaling pathway involving PKC and calcium fluxes has been seen for some family members, but it is not yet clear if it represents a distinct pathway or if it can be integrated in the canonical pathway, as PKC seems to be required for Wnt-mediated inactivation of GSK-3 kinase. Both pathways seem to involve interactions with G-proteins. May be involved in transduction and intercellular transmission of polarity information during tissue morphogenesis and/or in differentiated tissues. Plays a role in controlling early axon growth and guidance processes necessary for the formation of a subset of central and peripheral major fiber tracts. Involved in the migration of cranial neural crest cells. May also be implicated in the transmission of sensory information from the trunk and limbs to the brain. Controls commissural sensory axons guidance after midline crossing along the anterior-posterior axis in the developing spinal cord in a Wnt-dependent signaling pathway. Together with FZD6, is involved in the neural tube closure and plays a role in the regulation of the establishment of planar cell polarity (PCP). Promotes neurogenesis by maintaining sympathetic neuroblasts within the cell cycle in a beta-catenin-dependent manner. This Gallus gallus (Chicken) protein is Frizzled-3 (FZD3).